The following is a 315-amino-acid chain: Homoserine O-succinyltransferase (315 aa).

The active-site Acyl-thioester intermediate is the Cys142. Substrate is bound by residues Lys163 and Ser192. His235 functions as the Proton acceptor in the catalytic mechanism. Residue Glu237 is part of the active site. Arg249 lines the substrate pocket.

Belongs to the MetA family.

The protein localises to the cytoplasm. The catalysed reaction is L-homoserine + succinyl-CoA = O-succinyl-L-homoserine + CoA. The protein operates within amino-acid biosynthesis; L-methionine biosynthesis via de novo pathway; O-succinyl-L-homoserine from L-homoserine: step 1/1. In terms of biological role, transfers a succinyl group from succinyl-CoA to L-homoserine, forming succinyl-L-homoserine. The chain is Homoserine O-succinyltransferase from Tolumonas auensis (strain DSM 9187 / NBRC 110442 / TA 4).